Consider the following 58-residue polypeptide: uncharacterized protein (58 aa).

A helical transmembrane segment spans residues 5–27; the sequence is FLHANITIIPHSVLYVSLSYYII.

It localises to the membrane. This is an uncharacterized protein from Saccharomyces cerevisiae (strain ATCC 204508 / S288c) (Baker's yeast).